We begin with the raw amino-acid sequence, 439 residues long: MNISVSMNKFDSKIKFVQLVFVDINGMPKGMEIPASRLEEAVTDGISFDGSSVPGFQGIEDSDLVFKADPDTYVEVPWDNVARVYGFIYKDNKPYGADPRGILKRALEELEKEGYKAYIGPEPEFYLFKKNGTWELEIPDVGGYFDILTLDKARDIRREIAEYMPSFGLIPEVLHHEVGKAQHEIDFRYDEALKTADNIVSFKYITKAVAEMHGLYATFMPKPLFGFPGNGMHLHISLSKDGENVFMGEEGLSEIALHFIGGILKHAKALIAVTNPTVNSYKRLVPGYEAPVYISWGYRNRSALIRVPAFWGKGARIEYRCPDPSANPYFAFAAVLKAGLDGIKHKIDPFAYVEENVYEMSEEKRKELGIETLPGSLGEALEELEKDKVVKEALGDAYKNFINYKWKEWESYLEYLEEKHMPKDTKKVTEWELERYFFL.

Residues 12–93 (SKIKFVQLVF…VYGFIYKDNK (82 aa)) enclose the GS beta-grasp domain. Positions 99 to 439 (PRGILKRALE…EWELERYFFL (341 aa)) constitute a GS catalytic domain. Glutamate 122 and glutamate 124 together coordinate Mg(2+). Residue glutamate 172 participates in ATP binding. Residues glutamate 177 and glutamate 184 each contribute to the Mg(2+) site. Glycine 229 contacts L-glutamate. Mg(2+) is bound at residue histidine 233. ATP contacts are provided by residues 235-237 (HIS) and serine 237. 3 residues coordinate L-glutamate: arginine 283, glutamate 289, and arginine 301. ATP-binding residues include arginine 301, arginine 306, and lysine 313. Glutamate 318 contacts Mg(2+). Arginine 320 serves as a coordination point for L-glutamate.

Belongs to the glutamine synthetase family. Oligomer of 12 subunits arranged in the form of two hexagons. Requires Mg(2+) as cofactor.

Its subcellular location is the cytoplasm. It catalyses the reaction L-glutamate + NH4(+) + ATP = L-glutamine + ADP + phosphate + H(+). Functionally, probably involved in nitrogen metabolism via ammonium assimilation. Catalyzes the ATP-dependent biosynthesis of glutamine from glutamate and ammonia. In Pyrococcus woesei, this protein is Glutamine synthetase.